Consider the following 318-residue polypeptide: Ubiquinone biosynthesis protein COQ9, mitochondrial (318 aa).

The transit peptide at 1-44 (MAAAAVSGALGRAGWRLLQLRCLPVARCRQALVPRAFHASAVGL) directs the protein to the mitochondrion. Positions 16 to 31 (RLLQLRCLPVARCRQA) match the SIFI-degron motif. The interval 44 to 98 (LRSSDEQKQQPPNSFSQQHSETQGAEKPDPESSHSPPRYTDQGGEEEEDYESEEQ) is disordered. The segment covering 52-66 (QQPPNSFSQQHSETQ) has biased composition (polar residues). Residues 86-97 (GGEEEEDYESEE) show a composition bias toward acidic residues. At Lys175 the chain carries N6-acetyllysine. Residue Arg244 coordinates a 1,2-diacylglycero-3-phosphoethanolamine.

Belongs to the COQ9 family. In terms of assembly, homodimer. Heterodimer; two heterodimers of COQ7:COQ9 come together on the same side of the lipid pseudo-bilayer and form a curved tetramer with a hydrophobic surface suitable for membrane interaction. These two tetramers assemble into a soluble octamer with a pseudo-bilayer of lipids captured within. Interacts with COQ7; this interaction allows ubiquinone (CoQ) isoprene intermediates presentation to COQ7 and facilitates the COQ7-mediated hydroxylase step. Post-translationally, in response to mitochondrial stress, the precursor protein is ubiquitinated by the SIFI complex in the cytoplasm before mitochondrial import, leading to its degradation. Within the SIFI complex, UBR4 initiates ubiquitin chain that are further elongated or branched by KCMF1.

It localises to the mitochondrion. It participates in cofactor biosynthesis; ubiquinone biosynthesis. Its function is as follows. Membrane-associated protein that warps the membrane surface to access and bind aromatic isoprenes with high specificity, including ubiquinone (CoQ) isoprene intermediates and presents them directly to COQ7, therefore facilitating the COQ7-mediated hydroxylase step. Participates in the biosynthesis of coenzyme Q, also named ubiquinone, an essential lipid-soluble electron transporter for aerobic cellular respiration. This chain is Ubiquinone biosynthesis protein COQ9, mitochondrial, found in Homo sapiens (Human).